The primary structure comprises 288 residues: N-acetylneuraminate lyase (288 aa).

Aceneuramate-binding residues include Ser44 and Thr45. Residue Tyr133 is the Proton donor of the active site. Lys161 acts as the Schiff-base intermediate with substrate in catalysis. Residues Thr163, Gly185, Asp187, Glu188, and Ser204 each contribute to the aceneuramate site.

The protein belongs to the DapA family. NanA subfamily. Homotetramer.

The protein localises to the cytoplasm. The enzyme catalyses aceneuramate = aldehydo-N-acetyl-D-mannosamine + pyruvate. It functions in the pathway amino-sugar metabolism; N-acetylneuraminate degradation; D-fructose 6-phosphate from N-acetylneuraminate: step 1/5. In terms of biological role, catalyzes the reversible aldol cleavage of N-acetylneuraminic acid (sialic acid; Neu5Ac) to form pyruvate and N-acetylmannosamine (ManNAc) via a Schiff base intermediate. The polypeptide is N-acetylneuraminate lyase (Clostridium perfringens (strain ATCC 13124 / DSM 756 / JCM 1290 / NCIMB 6125 / NCTC 8237 / Type A)).